The following is a 151-amino-acid chain: MKIINIKIIRNNINNFSLPQHITPGSAGLDLLACIEKPVSILPKETRLIPTGIAIYIEDIEVAGIILPRSGLGHYYGIVLGNTIGLIDSDYQGEIMISLWNRGSNKFILYPGKRIAQLLFISILRVKLSLVKSFDPFMKTIRGVKGFGHSM.

Residues 69-71, Asn-82, 86-88, and Met-96 each bind substrate; these read RSG and LID.

The protein belongs to the dUTPase family. It depends on Mg(2+) as a cofactor.

It catalyses the reaction dUTP + H2O = dUMP + diphosphate + H(+). The protein operates within pyrimidine metabolism; dUMP biosynthesis; dUMP from dCTP (dUTP route): step 2/2. Its function is as follows. This enzyme is involved in nucleotide metabolism: it produces dUMP, the immediate precursor of thymidine nucleotides and it decreases the intracellular concentration of dUTP so that uracil cannot be incorporated into DNA. In Blochmanniella floridana, this protein is Deoxyuridine 5'-triphosphate nucleotidohydrolase.